Consider the following 292-residue polypeptide: uncharacterized protein (292 aa).

Disordered regions lie at residues 29-50 (SEKP…LRDS) and 166-292 (VKRK…EELK). Ser-50 is modified (phosphoserine). 2 stretches are compositionally biased toward polar residues: residues 176 to 189 (NSKN…PVNN) and 208 to 217 (GSPTNFSKLI). The segment covering 221–239 (YKDEWLQQQKADSDRRTPK) has biased composition (basic and acidic residues). Composition is skewed to polar residues over residues 240-250 (TSEASVSTQST) and 260-270 (DTETPQNSETP).

Post-translationally, phosphorylated upon DNA damage.

This is an uncharacterized protein from Rattus norvegicus (Rat).